A 67-amino-acid polypeptide reads, in one-letter code: Cell division protein ZapB (67 aa).

A coiled-coil region spans residues L3 to V59.

The protein belongs to the ZapB family. As to quaternary structure, homodimer. The ends of the coiled-coil dimer bind to each other, forming polymers. Interacts with FtsZ.

The protein resides in the cytoplasm. In terms of biological role, non-essential, abundant cell division factor that is required for proper Z-ring formation. It is recruited early to the divisome by direct interaction with FtsZ, stimulating Z-ring assembly and thereby promoting cell division earlier in the cell cycle. Its recruitment to the Z-ring requires functional FtsA or ZipA. This chain is Cell division protein ZapB, found in Shewanella halifaxensis (strain HAW-EB4).